The primary structure comprises 232 residues: Homeobox protein SAX-1 (232 aa).

3 disordered regions span residues 1–64 (CLPD…SCAK), 122–150 (KQHP…RPAA), and 185–208 (LLGA…LCPS). Positions 65-124 (PRRARTAFTYEQLVALENKFRATRYLSVCERLNLALSLSLTETQVKIWFQNRRTKWKKQH) form a DNA-binding region, homeobox. The span at 126–142 (GADGAAAPAPPAAARCS) shows a compositional bias: low complexity.

Belongs to the NK-1 homeobox family. In terms of tissue distribution, transiently expressed in the birth zone of the whole spinal cord regardless of the axial level.

Its subcellular location is the nucleus. This is Homeobox protein SAX-1 (SAX1) from Gallus gallus (Chicken).